We begin with the raw amino-acid sequence, 65 residues long: Large ribosomal subunit protein bL35 (65 aa).

The interval 1 to 23 is disordered; the sequence is MPKMKTHRGAAKRFKKTGTGKLK.

This sequence belongs to the bacterial ribosomal protein bL35 family.

The protein is Large ribosomal subunit protein bL35 of Clostridium perfringens (strain ATCC 13124 / DSM 756 / JCM 1290 / NCIMB 6125 / NCTC 8237 / Type A).